The chain runs to 306 residues: Peroxisomal protein PEX21 (306 aa).

Residue cysteine 4 forms a Glycyl cysteine thioester (Cys-Gly) (interchain with G-Cter in ubiquitin) linkage. A disordered region spans residues 172–203 (ERQVQDDEKEQQQDKDDDFHLKETSPLDEDQR).

It belongs to the peroxin-21 family. Interacts with PEX7. Post-translationally, monoubiquitinated at Cys-4; acts as a signal for PEX21 extraction and is required for proper export from peroxisomes and recycling.

It is found in the cytoplasm. The protein resides in the cytosol. The protein localises to the peroxisome. In terms of biological role, mediates peroxisomal import of proteins containing a C-terminal PTS2-type peroxisomal targeting signal via its interaction with PEX7. Interaction with PEX7 only takes place when PEX7 is associated with cargo proteins containing a PTS2 peroxisomal targeting signal. PEX7 along with PTS2-containing cargo proteins are then translocated through the PEX13-PEX14 docking complex together with PEX21. In Kluyveromyces lactis (strain ATCC 8585 / CBS 2359 / DSM 70799 / NBRC 1267 / NRRL Y-1140 / WM37) (Yeast), this protein is Peroxisomal protein PEX21 (PEX21).